The following is a 370-amino-acid chain: Peptidyl-prolyl cis-trans isomerase D (370 aa).

Position 5 is a phosphoserine (S5). One can recognise a PPIase cyclophilin-type domain in the interval 19 to 183; that stretch reads FFDVDIGGER…KLCVIAECGE (165 aa). At K171 the chain carries N6-acetyllysine. The chaperone activity stretch occupies residues 185-215; it reads KEGDDWGIFPKDGSGDSHPDFPEDADVDLKD. S198 bears the Phosphoserine mark. The interval 214-370 is interaction with HSP90AB1; it reads KDVDKILLIS…EKAAYAKMFA (157 aa). TPR repeat units follow at residues 223–256, 273–306, and 307–340; these read SEDL…VEGS, LSCV…DPSN, and TKAL…APED.

It belongs to the cyclophilin-type PPIase family. PPIase D subfamily. In terms of assembly, identified in ESR1 or NR3C1/GCR steroid receptor-chaperone complexes. Found in HSP90 chaperone complexes with kinase clients LCK or EIF2AK1. Two monomers associate with one HSP90 homodimer. Interacts with HSP90AA1. Interacts with HSP90AB1; PPID and FKBP4 compete for binding to HSP90AB1 and the interaction is mutually exclusive with the PPID:HSPA8 interaction. Interacts with HSPA8; PPID and STIP1 but not FKBP4 compete for binding to HSPA8 and the interaction is mutually exclusive with the PPID:HSP90AB1 interaction. Interacts with S100A1 and S100A2; the interactions dissociate the PPID:HSP90AA1 interaction. Interacts with S100A6. Interacts with MYB, ILF2, XRCC6, RACK1 and RPS3. Interacts with cytoplasmic dynein 1 intermediate chain (DYNC1I1 or DYNC1I2). In terms of processing, the N-terminus is blocked. In terms of tissue distribution, detected in heart, thymis and brain.

It localises to the cytoplasm. Its subcellular location is the nucleus. It is found in the nucleolus. The protein resides in the nucleoplasm. It carries out the reaction [protein]-peptidylproline (omega=180) = [protein]-peptidylproline (omega=0). Its activity is regulated as follows. Less sensitive to inhibition by cyclosporin A than is CYP-18. PPIase that catalyzes the cis-trans isomerization of proline imidic peptide bonds in oligopeptides and may therefore assist protein folding. Proposed to act as a co-chaperone in HSP90 complexes such as in unligated steroid receptors heterocomplexes. Different co-chaperones seem to compete for association with HSP90 thus establishing distinct HSP90-co-chaperone-receptor complexes with the potential to exert tissue-specific receptor activity control. May have a preference for estrogen receptor complexes and is not found in glucocorticoid receptor complexes. May be involved in cytoplasmic dynein-dependent movement of the receptor from the cytoplasm to the nucleus. May regulate MYB by inhibiting its DNA-binding activity. Involved in regulation of AHR signaling by promoting the formation of the AHR:ARNT dimer; the function is independent of HSP90 but requires the chaperone activity. Involved in regulation of UV radiation-induced apoptosis. This Bos taurus (Bovine) protein is Peptidyl-prolyl cis-trans isomerase D.